A 1058-amino-acid polypeptide reads, in one-letter code: Carbamoyl phosphate synthase large chain (1058 aa).

The segment at 1-401 (MSKRKDIQKI…SLLKACRSLE (401 aa)) is carboxyphosphate synthetic domain. Residues arginine 129, arginine 169, glycine 175, glycine 176, arginine 208, isoleucine 210, glutamate 215, glycine 241, isoleucine 242, histidine 243, glutamine 284, and glutamate 298 each coordinate ATP. Positions 133-327 (KQLMQELDQP…IAKLAAKIAV (195 aa)) constitute an ATP-grasp 1 domain. 3 residues coordinate Mg(2+): glutamine 284, glutamate 298, and asparagine 300. Residues glutamine 284, glutamate 298, and asparagine 300 each coordinate Mn(2+). The interval 402 to 546 (IGVCHNEMTS…YSTYELENES (145 aa)) is oligomerization domain. The tract at residues 547–929 (VQSNKESILV…ALYKAFEANN (383 aa)) is carbamoyl phosphate synthetic domain. Residues 671–861 (EKALKELGIP…MAQIATKLIL (191 aa)) form the ATP-grasp 2 domain. ATP is bound by residues arginine 707, serine 746, isoleucine 748, glutamate 752, glycine 777, valine 778, histidine 779, serine 780, glutamine 820, and glutamate 832. Residues glutamine 820, glutamate 832, and asparagine 834 each coordinate Mg(2+). 3 residues coordinate Mn(2+): glutamine 820, glutamate 832, and asparagine 834. The 129-residue stretch at 930–1058 (SHLSEFGQIV…ESRCFNIEAI (129 aa)) folds into the MGS-like domain. Positions 930–1058 (SHLSEFGQIV…ESRCFNIEAI (129 aa)) are allosteric domain.

The protein belongs to the CarB family. As to quaternary structure, composed of two chains; the small (or glutamine) chain promotes the hydrolysis of glutamine to ammonia, which is used by the large (or ammonia) chain to synthesize carbamoyl phosphate. Tetramer of heterodimers (alpha,beta)4. Requires Mg(2+) as cofactor. It depends on Mn(2+) as a cofactor.

It catalyses the reaction hydrogencarbonate + L-glutamine + 2 ATP + H2O = carbamoyl phosphate + L-glutamate + 2 ADP + phosphate + 2 H(+). The catalysed reaction is hydrogencarbonate + NH4(+) + 2 ATP = carbamoyl phosphate + 2 ADP + phosphate + 2 H(+). It functions in the pathway amino-acid biosynthesis; L-arginine biosynthesis; carbamoyl phosphate from bicarbonate: step 1/1. The protein operates within pyrimidine metabolism; UMP biosynthesis via de novo pathway; (S)-dihydroorotate from bicarbonate: step 1/3. Large subunit of the glutamine-dependent carbamoyl phosphate synthetase (CPSase). CPSase catalyzes the formation of carbamoyl phosphate from the ammonia moiety of glutamine, carbonate, and phosphate donated by ATP, constituting the first step of 2 biosynthetic pathways, one leading to arginine and/or urea and the other to pyrimidine nucleotides. The large subunit (synthetase) binds the substrates ammonia (free or transferred from glutamine from the small subunit), hydrogencarbonate and ATP and carries out an ATP-coupled ligase reaction, activating hydrogencarbonate by forming carboxy phosphate which reacts with ammonia to form carbamoyl phosphate. This chain is Carbamoyl phosphate synthase large chain, found in Streptococcus pyogenes serotype M5 (strain Manfredo).